Reading from the N-terminus, the 926-residue chain is MSFQNPSYINAKHRSFLQPKDTQDSQDLRNWVSHSSVDEETAYSSSTLSSSSSKSFPCYDEYDEIKSPDDQKVEYMKTLRTLEEDAFSYTDSVYDFEERSFDEHEPPIPPLHKTGVFSVPLQPTHTVNSNSDDGYENSSKNEYLDFNSEISASPVNEPMTHSQSYTSIDRLNSSSSHYSKDVPLLCGSLTIDCPTPIDLRGMLGPFMQKNPDEASFLRYSAITCQPEDMNNNGLQLRTWSTGRDIQIAVCLTLSDEDLASFAISLSSIMNNLKHLCSRSKSRVWGNESWEKVLVCVVIDGRNTVHQNVLDLLASIGVYQPHIAKGRVNGKRTLSHMYEFTSTINVDEKLNLTTATGDGNVPMQMLLCVKDRRLGTYNSHRWFLNGIASLARPKVCLFVRNGARLGPTSIYHAWKAFDVDSTIGGMCGKTSIDTGKFGFRLLNPFIASQHFDQMIHNNLRLPYDSCMGYISNALNAIYGFRYVALQDSYPNPGPLADYFEQDQYEIPRRGILQSNAFLAQEQLLFWKVITRKDAKWHLQYVPEACATIEAPNSMAGILESKKSEINSSFSLAVYVIVDFFSLWTTRHKFFRFLLLTVQSLVFAIEKLVNFFSMANFFLAFYFVCNATSYSSLNPYGNWARPLFLVFEYILICLIFSQFMLAMGNRPRSCRVLLFISTALFSIIMIYFVFCVFYISLIPLHNSDNSEIVLGNNYFTTLIFSSLLILACYAFVSLICMDPFFIFTCIVQYILLMPTRIYTEQIYALCHLDDASISKDDNQQEFNFDTGITHCSMNDEGYTTISIPKANVLNSVYNSSLKNFSSSNDTSVYHDVQDHCYRKPQSYEDHYQDIRTRYVLVWAVSNLILAIVLIQVFDGMRFINNGYMKYIFWSIVAFTAWKTMGAVTFIATKIISRIANCVKSKLYIFNDP.

The interval 1–56 (MSFQNPSYINAKHRSFLQPKDTQDSQDLRNWVSHSSVDEETAYSSSTLSSSSSKSF) is disordered. A compositionally biased stretch (low complexity) spans 44 to 55 (SSSTLSSSSSKS). Transmembrane regions (helical) follow at residues 564–584 (INSS…LWTT), 599–619 (LVFA…FLAF), 641–661 (LFLV…MLAM), 671–691 (LLFI…FCVF), 721–741 (LLIL…FFIF), 853–873 (VLVW…VFDG), and 885–905 (IFWS…TFIA).

The protein belongs to the chitin synthase family.

Its subcellular location is the membrane. Functionally, plays a role in septum formation. Has no chitin synthase activity. In Schizosaccharomyces pombe (strain 972 / ATCC 24843) (Fission yeast), this protein is Chitin synthase-like protein 2 (chs2).